Reading from the N-terminus, the 78-residue chain is Acyl carrier protein (78 aa).

In terms of domain architecture, Carrier spans 1-76; the sequence is MALFEDIQAV…DVVKYIEDNK (76 aa). Ser36 is modified (O-(pantetheine 4'-phosphoryl)serine).

This sequence belongs to the acyl carrier protein (ACP) family. 4'-phosphopantetheine is transferred from CoA to a specific serine of apo-ACP by AcpS. This modification is essential for activity because fatty acids are bound in thioester linkage to the sulfhydryl of the prosthetic group.

It localises to the cytoplasm. It functions in the pathway lipid metabolism; fatty acid biosynthesis. Functionally, carrier of the growing fatty acid chain in fatty acid biosynthesis. This Helicobacter pylori (strain G27) protein is Acyl carrier protein.